A 445-amino-acid polypeptide reads, in one-letter code: Beclin-1 (445 aa).

The BH3 motif lies at 103-122 (TMENLSRRLKVTGDLFDIMS). A coiled-coil region spans residues 137–264 (DTLLDQLDTQ…QLDKLKKTNV (128 aa)). The segment at 240–445 (DDLKSVENQM…AWVSSQFYNK (206 aa)) is evolutionary conserved domain (ECD). The tract at residues 420-445 (WTKALKFMLTNLKWGLAWVSSQFYNK) is required for membrane-association.

Belongs to the beclin family. As to quaternary structure, component of the PI3K (PI3KC3/PI3K-III/class III phosphatidylinositol 3-kinase) complex. In terms of processing, may be proteolytically processed by caspases; the C-terminal fragment(s) may induce apoptosis.

Its subcellular location is the cytoplasm. The protein localises to the golgi apparatus. It is found in the trans-Golgi network membrane. The protein resides in the endosome membrane. It localises to the endoplasmic reticulum membrane. Its subcellular location is the mitochondrion membrane. The protein localises to the cytoplasmic vesicle. It is found in the autophagosome. Functionally, plays a central role in autophagy. Acts as core subunit of different PI3K complex forms that mediate formation of phosphatidylinositol 3-phosphate and are believed to play a role in multiple membrane trafficking pathways: PI3KC3-C1 is involved in initiation of autophagosomes and PI3KC3-C2 in maturation of autophagosomes and endocytosis. Involved in regulation of degradative endocytic trafficking and required for the abscission step in cytokinesis, probably in the context of PI3KC3-C2. Essential for the formation of PI3KC3-C2 but not PI3KC3-C1 PI3K complex forms. Involved in endocytosis including endosome formation in neuronal cells. This Xenopus laevis (African clawed frog) protein is Beclin-1 (becn1).